We begin with the raw amino-acid sequence, 162 residues long: Ribose-5-phosphate isomerase B (162 aa).

D-ribulose 5-phosphate contacts are provided by residues aspartate 11–histidine 12 and glycine 70–glycine 74. Catalysis depends on glutamate 75, which acts as the Proton acceptor. Histidine 102 acts as the Proton donor in catalysis. Residues asparagine 103, arginine 113, arginine 137, and arginine 141 each contribute to the D-ribulose 5-phosphate site.

Belongs to the LacAB/RpiB family. In terms of assembly, homodimer.

The catalysed reaction is aldehydo-D-ribose 5-phosphate = D-ribulose 5-phosphate. It participates in carbohydrate degradation; pentose phosphate pathway; D-ribose 5-phosphate from D-ribulose 5-phosphate (non-oxidative stage): step 1/1. Catalyzes the interconversion of ribulose-5-P and ribose-5-P. This Mycobacterium leprae (strain TN) protein is Ribose-5-phosphate isomerase B.